We begin with the raw amino-acid sequence, 745 residues long: 5-methyltetrahydropteroyltriglutamate--homocysteine methyltransferase (745 aa).

Residues 16-19 (REWK) and K110 contribute to the 5-methyltetrahydropteroyltri-L-glutamate site. L-homocysteine-binding positions include 420 to 422 (IGS) and E473. L-methionine contacts are provided by residues 420 to 422 (IGS) and E473. W550 is a 5-methyltetrahydropteroyltri-L-glutamate binding site. D588 is an L-homocysteine binding site. An L-methionine-binding site is contributed by D588. Residue E594 coordinates 5-methyltetrahydropteroyltri-L-glutamate. Zn(2+)-binding residues include H630, C632, and E654. Residue H683 is the Proton donor of the active site. C715 provides a ligand contact to Zn(2+).

This sequence belongs to the vitamin-B12 independent methionine synthase family. Requires Zn(2+) as cofactor.

It catalyses the reaction 5-methyltetrahydropteroyltri-L-glutamate + L-homocysteine = tetrahydropteroyltri-L-glutamate + L-methionine. It functions in the pathway amino-acid biosynthesis; L-methionine biosynthesis via de novo pathway; L-methionine from L-homocysteine (MetE route): step 1/1. In terms of biological role, catalyzes the transfer of a methyl group from 5-methyltetrahydrofolate to homocysteine resulting in methionine formation. The polypeptide is 5-methyltetrahydropteroyltriglutamate--homocysteine methyltransferase (Streptococcus agalactiae serotype III (strain NEM316)).